The following is an 85-amino-acid chain: U4-theraphotoxin-Hhn1a (85 aa).

The signal sequence occupies residues 1-22; the sequence is MKVTLIAILTCAAVLVLRTTAA. A propeptide spanning residues 23-48 is cleaved from the precursor; sequence EELEAESQLMEVGMPDTELAAVDEER. Cystine bridges form between Cys-52–Cys-66, Cys-56–Cys-77, and Cys-71–Cys-82.

The protein belongs to the neurotoxin 12 (Hwtx-2) family. 02 (Hwtx-2) subfamily. In terms of assembly, monomer. Expressed by the venom gland.

The protein localises to the secreted. In terms of biological role, neurotoxin active on both insects and mammals. The protein is U4-theraphotoxin-Hhn1a of Cyriopagopus hainanus (Chinese bird spider).